We begin with the raw amino-acid sequence, 504 residues long: ATP synthase subunit alpha, chloroplastic (504 aa).

Position 170–177 (170–177 (GDRQTGKT)) interacts with ATP.

This sequence belongs to the ATPase alpha/beta chains family. As to quaternary structure, F-type ATPases have 2 components, CF(1) - the catalytic core - and CF(0) - the membrane proton channel. CF(1) has five subunits: alpha(3), beta(3), gamma(1), delta(1), epsilon(1). CF(0) has four main subunits: a, b, b' and c.

Its subcellular location is the plastid. The protein resides in the chloroplast thylakoid membrane. The enzyme catalyses ATP + H2O + 4 H(+)(in) = ADP + phosphate + 5 H(+)(out). Produces ATP from ADP in the presence of a proton gradient across the membrane. The alpha chain is a regulatory subunit. The sequence is that of ATP synthase subunit alpha, chloroplastic from Hordeum vulgare (Barley).